A 226-amino-acid polypeptide reads, in one-letter code: Insulin-like growth factor-binding protein 6 (226 aa).

Positions 1–25 (MTWDGLPTQPLLMLLMLLFAAGSES) are cleaved as a signal peptide. One can recognise an IGFBP N-terminal domain in the interval 26–99 (ALAGCPGCGP…LIGQGRCQRA (74 aa)). 4 disulfides stabilise this stretch: Cys-30-Cys-33, Cys-49-Cys-55, Cys-63-Cys-76, and Cys-70-Cys-96. The disordered stretch occupies residues 92-148 (GQGRCQRARGPSEETTKESKPHGGASRPRDRDRQKNPRTSAAPIRPSPVQDGEMGPC). A compositionally biased stretch (basic and acidic residues) spans 101–126 (GPSEETTKESKPHGGASRPRDRDRQK). One can recognise a Thyroglobulin type-1 domain in the interval 145-220 (MGPCRRHLDS…SPDGQGSSQC (76 aa)). 3 disulfides stabilise this stretch: Cys-148/Cys-176, Cys-187/Cys-198, and Cys-200/Cys-220. The segment at 205-226 (GQPLPVSPDGQGSSQCSARSSG) is disordered. A compositionally biased stretch (polar residues) spans 214 to 226 (GQGSSQCSARSSG).

Interacts (via C-terminal domain) with PHB2. O-glycosylated.

The protein resides in the secreted. Functionally, IGF-binding proteins prolong the half-life of the IGFs and have been shown to either inhibit or stimulate the growth promoting effects of the IGFs on cell culture. They alter the interaction of IGFs with their cell surface receptors. Activates the MAPK signaling pathway and induces cell migration. In Rattus norvegicus (Rat), this protein is Insulin-like growth factor-binding protein 6 (Igfbp6).